A 164-amino-acid polypeptide reads, in one-letter code: Protein-export protein SecB (164 aa).

Belongs to the SecB family. In terms of assembly, homotetramer, a dimer of dimers. One homotetramer interacts with 1 SecA dimer.

It localises to the cytoplasm. Functionally, one of the proteins required for the normal export of preproteins out of the cell cytoplasm. It is a molecular chaperone that binds to a subset of precursor proteins, maintaining them in a translocation-competent state. It also specifically binds to its receptor SecA. This is Protein-export protein SecB from Burkholderia orbicola (strain MC0-3).